The following is a 100-amino-acid chain: Large ribosomal subunit protein uL23 (100 aa).

It belongs to the universal ribosomal protein uL23 family. As to quaternary structure, part of the 50S ribosomal subunit. Contacts protein L29, and trigger factor when it is bound to the ribosome.

In terms of biological role, one of the early assembly proteins it binds 23S rRNA. One of the proteins that surrounds the polypeptide exit tunnel on the outside of the ribosome. Forms the main docking site for trigger factor binding to the ribosome. The polypeptide is Large ribosomal subunit protein uL23 (Synechococcus sp. (strain CC9605)).